The sequence spans 189 residues: GTP cyclohydrolase 1 (189 aa).

Positions 78, 81, and 150 each coordinate Zn(2+).

This sequence belongs to the GTP cyclohydrolase I family. In terms of assembly, toroid-shaped homodecamer, composed of two pentamers of five dimers.

The catalysed reaction is GTP + H2O = 7,8-dihydroneopterin 3'-triphosphate + formate + H(+). The protein operates within cofactor biosynthesis; 7,8-dihydroneopterin triphosphate biosynthesis; 7,8-dihydroneopterin triphosphate from GTP: step 1/1. The sequence is that of GTP cyclohydrolase 1 from Bacillus pumilus (strain SAFR-032).